Here is a 225-residue protein sequence, read N- to C-terminus: Biosynthetic peptidoglycan transglycosylase (225 aa).

The chain crosses the membrane as a helical span at residues 8-28 (VLLIFIGAILLIQLWIFSSLV).

It belongs to the glycosyltransferase 51 family.

Its subcellular location is the cell inner membrane. It carries out the reaction [GlcNAc-(1-&gt;4)-Mur2Ac(oyl-L-Ala-gamma-D-Glu-L-Lys-D-Ala-D-Ala)](n)-di-trans,octa-cis-undecaprenyl diphosphate + beta-D-GlcNAc-(1-&gt;4)-Mur2Ac(oyl-L-Ala-gamma-D-Glu-L-Lys-D-Ala-D-Ala)-di-trans,octa-cis-undecaprenyl diphosphate = [GlcNAc-(1-&gt;4)-Mur2Ac(oyl-L-Ala-gamma-D-Glu-L-Lys-D-Ala-D-Ala)](n+1)-di-trans,octa-cis-undecaprenyl diphosphate + di-trans,octa-cis-undecaprenyl diphosphate + H(+). It functions in the pathway cell wall biogenesis; peptidoglycan biosynthesis. Peptidoglycan polymerase that catalyzes glycan chain elongation from lipid-linked precursors. In Acinetobacter baumannii (strain ACICU), this protein is Biosynthetic peptidoglycan transglycosylase.